Consider the following 495-residue polypeptide: 2-carboxy-D-arabinitol-1-phosphatase (495 aa).

Residues 1–12 (MLLFAPTPPPSP) are compositionally biased toward pro residues. The tract at residues 1 to 23 (MLLFAPTPPPSPATAHRRPGGSA) is disordered. A chloroplast-targeting transit peptide spans 1–50 (MLLFAPTPPPSPATAHRRPGGSAASCIRCSSVRELDRSPSRPPLPPLAEA). His58 acts as the Tele-phosphohistidine intermediate in catalysis. The active-site Proton donor/acceptor is the Glu132.

Belongs to the phosphoglycerate mutase family.

Its subcellular location is the plastid. It localises to the chloroplast stroma. It catalyses the reaction 2-carboxy-D-arabinitol 1-phosphate + H2O = 2-carboxy-D-arabinitol + phosphate. Inactivated by oxidized glutathione (GSSG) at pH 8.0. Functionally, phosphoglycerate mutase-like protein lacking PGM activity, but having 2-carboxy-D-arabinitol 1-phosphate (CA1P) phosphatase activity. Can dephosphorylate the closely related compounds 2-carboxy-D-arabinitol 1,5-bisphosphate (CABP) and 2-carboxy-D-ribitol-1,5-bisphosphate(CRBP), and 2,3-diphosphoglycerate. Prevents the accumulation of D-glycero-2,3-pentodiulose-1,5-bisphosphate (PDBP) a potent inhibitor of ribulose-1,5-bisphosphate carboxylase (RuBisCO). PDBP is produced during the oxidation of ribulose-1,5-bisphosphate, the substrate of RuBisCO. In Triticum aestivum (Wheat), this protein is 2-carboxy-D-arabinitol-1-phosphatase.